Consider the following 711-residue polypeptide: Constitutive ornithine decarboxylase (711 aa).

Position 347 is an N6-(pyridoxal phosphate)lysine (Lys347).

The protein belongs to the Orn/Lys/Arg decarboxylase class-I family. The cofactor is pyridoxal 5'-phosphate.

It catalyses the reaction L-ornithine + H(+) = putrescine + CO2. Its pathway is amine and polyamine biosynthesis; putrescine biosynthesis via L-ornithine pathway; putrescine from L-ornithine: step 1/1. The sequence is that of Constitutive ornithine decarboxylase (speC) from Escherichia coli (strain K12).